The primary structure comprises 229 residues: MSLFVTFEGPEGSGKSTQARLLYESLYARRYPVILTREPGGTRIGDLIRRIVLDLQHTEMAPTTETLLFSAARAQLVSEVIRPYLEQGGIVLCDRYADSTYAYQGYGLGRDLAELRTITAAATGGLRPDITFYLDISAEDGLERKRRKHPGARLMGQRGVDQEWNRLDARELEYHQRVEAGYRALIAQDPERWRVLDARQSIEALAEQIAAIVEPYLASIPQLEAVPYS.

9–16 contacts ATP; the sequence is GPEGSGKS.

This sequence belongs to the thymidylate kinase family.

The catalysed reaction is dTMP + ATP = dTDP + ADP. Functionally, phosphorylation of dTMP to form dTDP in both de novo and salvage pathways of dTTP synthesis. The sequence is that of Thymidylate kinase from Roseiflexus castenholzii (strain DSM 13941 / HLO8).